We begin with the raw amino-acid sequence, 482 residues long: MDTKGSTVTISSSTPPQNCSGNTNFRTNSSSNKSCCHDGQSTGCALQTPQGQGCGSSPCLYRCPHYLIRTYSFHPCLDDGSRCTEGINTHEKETMQILNERLANYLEKVRMLEGENADLEDKIQEACSKALPILCPDYLSYYTTIEELQQKILCTKAENSRLVSQIDNTKLAADDLRANYEAELSLRQLVEADANGLKQILDALTLSKADLEARVQSLTEELLCLKTNHEEEVNSLQCQLGDRINIEVTAAPSVDLNQILQEMRCRYESIMETNRKDVEEWFNTQMEELNQQVVSSSQQQQCCQKDIIELRRTISALEIELQAQHRMRESQECILTETEARYTALLAQIQSLIHNLEAQVADIRSALQRQSQEYEVLLDIKSRLECEIATYRSLLESLDGRLPCNPCATKWEPSCQARAMECFTPVYTSSSLPGIHKPCRASGPPSRILVKICTITKEIKDGKVISSYEHVQPCYITRATKV.

The disordered stretch occupies residues 1–24; it reads MDTKGSTVTISSSTPPQNCSGNTN. The segment at 1–91 is head; it reads MDTKGSTVTI…RCTEGINTHE (91 aa). The 312-residue stretch at 91–402 folds into the IF rod domain; that stretch reads EKETMQILNE…SLLESLDGRL (312 aa). Residues 92–126 are coil 1A; sequence KETMQILNERLANYLEKVRMLEGENADLEDKIQEA. Positions 127–137 are linker 1; the sequence is CSKALPILCPD. The interval 138-238 is coil 1B; that stretch reads YLSYYTTIEE…HEEEVNSLQC (101 aa). The interval 239 to 254 is linker 12; it reads QLGDRINIEVTAAPSV. The segment at 255–398 is coil 2; that stretch reads DLNQILQEMR…ATYRSLLESL (144 aa). The segment at 399-482 is tail; it reads DGRLPCNPCA…PCYITRATKV (84 aa).

It belongs to the intermediate filament family. In terms of assembly, heterotetramer of two type I and two type II keratins.

In terms of biological role, may play a role in late hair differentiation. This Mus musculus (Mouse) protein is Keratin, type I cytoskeletal 39 (Krt39).